The primary structure comprises 359 residues: MDDQDPGGISPLQQMVASGAGAVVTSLFMTPLDVVKVRLQSQRPSATSELTTPSRFWSLSYTKSSSALQSPGKCLLYCNGVLEPLYLCPNGTRCATWFQDPTRFTGTLDAFVKIVRHEGTRTLWSGLPATLVMTVPATAIYFTAYDQLKAFLCGQSLTSDLYAPMVAGALARMGTVTVVSPLELVRTKLQAQHVSYRELASSVQAAVTQGGWRSLWLGWGPTALRDVPFSALYWFNYELVKSWLSGLRPKDQTSVGISFVAGGISGMVAATLTLPFDVVKTQRQMSLGAVEAVRVKPPRVDSTWLLLRRIRAESGTRGLFAGFLPRIIKAAPSCAIMISTYEFGKSFFQRLNQEQPLGR.

At 1 to 14 the chain is on the mitochondrial intermembrane side; the sequence is MDDQDPGGISPLQQ. 3 Solcar repeats span residues 9 to 151, 159 to 243, and 253 to 347; these read ISPL…LKAF, SDLY…VKSW, and TSVG…GKSF. Residues 15-35 traverse the membrane as a helical segment; that stretch reads MVASGAGAVVTSLFMTPLDVV. Topologically, residues 36–121 are mitochondrial matrix; it reads KVRLQSQRPS…VKIVRHEGTR (86 aa). Residues Cys74, Cys78, Cys88, and Cys94 each contribute to the [2Fe-2S] cluster site. A helical membrane pass occupies residues 122–142; it reads TLWSGLPATLVMTVPATAIYF. The Mitochondrial intermembrane portion of the chain corresponds to 143 to 164; sequence TAYDQLKAFLCGQSLTSDLYAP. Residues 165-185 form a helical membrane-spanning segment; that stretch reads MVAGALARMGTVTVVSPLELV. The Mitochondrial matrix segment spans residues 186-214; that stretch reads RTKLQAQHVSYRELASSVQAAVTQGGWRS. Residues 215–235 traverse the membrane as a helical segment; that stretch reads LWLGWGPTALRDVPFSALYWF. Residues 236–255 lie on the Mitochondrial intermembrane side of the membrane; that stretch reads NYELVKSWLSGLRPKDQTSV. Residues 256–276 form a helical membrane-spanning segment; sequence GISFVAGGISGMVAATLTLPF. Topologically, residues 277 to 317 are mitochondrial matrix; sequence DVVKTQRQMSLGAVEAVRVKPPRVDSTWLLLRRIRAESGTR. A helical membrane pass occupies residues 318-338; the sequence is GLFAGFLPRIIKAAPSCAIMI. The Mitochondrial intermembrane segment spans residues 339–359; sequence STYEFGKSFFQRLNQEQPLGR.

This sequence belongs to the mitochondrial carrier (TC 2.A.29) family. Post-translationally, cleaved and degraded by AFG3L2; degradation by AFG3L2 is regulated by the ability of SLC25A39 to bind iron-sulfur. In absence of mitochondrial glutathione, SLC25A39 binds iron-sulfur, preventing cleavage and degradation by AFG3L2. The presence of mitochondrial glutathione prevents iron-sulfur-binding to SLC25A39, promoting cleavage and degradation by AFG3L2. In terms of tissue distribution, abundant expression in bone marrow, spleen, testis and kidney.

The protein resides in the mitochondrion inner membrane. It catalyses the reaction glutathione(in) = glutathione(out). Its activity is regulated as follows. The activity of SLC25A39 is regulated by levels of mitochondrial glutathione via its ability to bind [2Fe-2S] iron-sulfur cluster. Upon physiological levels of mitochondrial glutathione, glutathione prevents iron-sulfur-binding to SLC25A39 promoting cleavage and degradation by AFG3L2. Upon depletion of mitochondrial glutathione, SLC25A39 binds iron-sulfur, preventing cleavage and degradation by AFG3L2. Its function is as follows. Mitochondrial transporter required for glutathione import into mitochondria. Glutathione, which plays key roles in oxidative metabolism, is produced exclusively in the cytosol and is imported in many organelles. Mitochondrial glutathione is required for the activity and stability of proteins containing iron-sulfur clusters, as well as erythropoiesis. This Mus musculus (Mouse) protein is Mitochondrial glutathione transporter SLC25A39.